A 104-amino-acid chain; its full sequence is Protamine-3 (104 aa).

The segment at 1–104 (MGSRCAKLST…PSPEPKQKHS (104 aa)) is disordered. The segment covering 45–70 (EGEEEEEDEEDEEEEDDDEEDEEEEQ) has biased composition (acidic residues). Serine 96 carries the post-translational modification Phosphoserine.

It belongs to the protamine P3 family. In terms of tissue distribution, testis.

It is found in the nucleus. The protein localises to the chromosome. In terms of biological role, protamines substitute for histones in the chromatin of sperm during the haploid phase of spermatogenesis. They compact sperm DNA into a highly condensed, stable and inactive complex. The protein is Protamine-3 (Prm3) of Rattus norvegicus (Rat).